Here is a 242-residue protein sequence, read N- to C-terminus: Large ribosomal subunit protein uL1 (242 aa).

This sequence belongs to the universal ribosomal protein uL1 family. Part of the 50S ribosomal subunit.

Its function is as follows. Binds directly to 23S rRNA. The L1 stalk is quite mobile in the ribosome, and is involved in E site tRNA release. Functionally, protein L1 is also a translational repressor protein, it controls the translation of the L11 operon by binding to its mRNA. In Persephonella marina (strain DSM 14350 / EX-H1), this protein is Large ribosomal subunit protein uL1.